A 187-amino-acid chain; its full sequence is Large ribosomal subunit protein uL6 (187 aa).

Residues 151 to 170 are disordered; it reads EAARIRSLRPPEPYKGKGIK.

The protein belongs to the universal ribosomal protein uL6 family. Part of the 50S ribosomal subunit.

Its function is as follows. This protein binds to the 23S rRNA, and is important in its secondary structure. It is located near the subunit interface in the base of the L7/L12 stalk, and near the tRNA binding site of the peptidyltransferase center. The sequence is that of Large ribosomal subunit protein uL6 from Chloroflexus aurantiacus (strain ATCC 29366 / DSM 635 / J-10-fl).